Here is a 419-residue protein sequence, read N- to C-terminus: Arginine biosynthesis bifunctional protein ArgJ (419 aa).

6 residues coordinate substrate: Thr154, Lys180, Thr191, Glu277, Asn414, and Thr419. The Nucleophile role is filled by Thr191.

The protein belongs to the ArgJ family. Heterotetramer of two alpha and two beta chains.

Its subcellular location is the cytoplasm. The enzyme catalyses N(2)-acetyl-L-ornithine + L-glutamate = N-acetyl-L-glutamate + L-ornithine. The catalysed reaction is L-glutamate + acetyl-CoA = N-acetyl-L-glutamate + CoA + H(+). It participates in amino-acid biosynthesis; L-arginine biosynthesis; L-ornithine and N-acetyl-L-glutamate from L-glutamate and N(2)-acetyl-L-ornithine (cyclic): step 1/1. The protein operates within amino-acid biosynthesis; L-arginine biosynthesis; N(2)-acetyl-L-ornithine from L-glutamate: step 1/4. Its function is as follows. Catalyzes two activities which are involved in the cyclic version of arginine biosynthesis: the synthesis of N-acetylglutamate from glutamate and acetyl-CoA as the acetyl donor, and of ornithine by transacetylation between N(2)-acetylornithine and glutamate. The sequence is that of Arginine biosynthesis bifunctional protein ArgJ from Thermosynechococcus vestitus (strain NIES-2133 / IAM M-273 / BP-1).